The chain runs to 210 residues: Large ribosomal subunit protein uL3 (210 aa).

The segment at 125 to 151 (RHGQSRGPMSHGSRYHRRPGSMGPVAP) is disordered.

It belongs to the universal ribosomal protein uL3 family. In terms of assembly, part of the 50S ribosomal subunit. Forms a cluster with proteins L14 and L19.

Its function is as follows. One of the primary rRNA binding proteins, it binds directly near the 3'-end of the 23S rRNA, where it nucleates assembly of the 50S subunit. This chain is Large ribosomal subunit protein uL3, found in Bacillus mycoides (strain KBAB4) (Bacillus weihenstephanensis).